The sequence spans 232 residues: Uracil-DNA glycosylase (232 aa).

The active-site Proton acceptor is the Asp-66.

Belongs to the uracil-DNA glycosylase (UDG) superfamily. UNG family.

The protein localises to the cytoplasm. The enzyme catalyses Hydrolyzes single-stranded DNA or mismatched double-stranded DNA and polynucleotides, releasing free uracil.. Excises uracil residues from the DNA which can arise as a result of misincorporation of dUMP residues by DNA polymerase or due to deamination of cytosine. The polypeptide is Uracil-DNA glycosylase (Lactobacillus helveticus (strain DPC 4571)).